Here is a 349-residue protein sequence, read N- to C-terminus: Methionine import ATP-binding protein MetN (349 aa).

In terms of domain architecture, ABC transporter spans 5-245 (IDLKNITVQF…PQKQLTRQFV (241 aa)). 37 to 44 (GFSGAGKS) contacts ATP.

It belongs to the ABC transporter superfamily. Methionine importer (TC 3.A.1.24) family. The complex is composed of two ATP-binding proteins (MetN), two transmembrane proteins (MetI) and a solute-binding protein (MetQ).

Its subcellular location is the cell membrane. The enzyme catalyses L-methionine(out) + ATP + H2O = L-methionine(in) + ADP + phosphate + H(+). The catalysed reaction is D-methionine(out) + ATP + H2O = D-methionine(in) + ADP + phosphate + H(+). In terms of biological role, part of the ABC transporter complex MetNIQ involved in methionine import. Responsible for energy coupling to the transport system. The protein is Methionine import ATP-binding protein MetN of Lactobacillus johnsonii (strain CNCM I-12250 / La1 / NCC 533).